The following is a 407-amino-acid chain: Phosphopentomutase (407 aa).

Asp10, Asp306, His311, Asp347, His348, and His359 together coordinate Mn(2+).

It belongs to the phosphopentomutase family. It depends on Mn(2+) as a cofactor.

The protein localises to the cytoplasm. The catalysed reaction is 2-deoxy-alpha-D-ribose 1-phosphate = 2-deoxy-D-ribose 5-phosphate. It catalyses the reaction alpha-D-ribose 1-phosphate = D-ribose 5-phosphate. Its pathway is carbohydrate degradation; 2-deoxy-D-ribose 1-phosphate degradation; D-glyceraldehyde 3-phosphate and acetaldehyde from 2-deoxy-alpha-D-ribose 1-phosphate: step 1/2. Functionally, isomerase that catalyzes the conversion of deoxy-ribose 1-phosphate (dRib-1-P) and ribose 1-phosphate (Rib-1-P) to deoxy-ribose 5-phosphate (dRib-5-P) and ribose 5-phosphate (Rib-5-P), respectively. The protein is Phosphopentomutase of Salmonella dublin (strain CT_02021853).